The primary structure comprises 792 residues: Carboxysome assembly protein CsoS2 (792 aa).

A compositionally biased stretch (basic and acidic residues) spans 1–15 (MAKQSSRELALERRK). Residues 1 to 235 (MAKQSSRELA…EISQRVRELR (235 aa)) form an N-terminal domain region. 3 disordered regions span residues 1 to 259 (MAKQ…RNGS), 280 to 299 (QVVTGTQANRSSKTTGNEAS), and 338 to 359 (HGNRVTGNEVGRSEKVTGDEPG). The N-repeat 1 repeat unit spans residues 7 to 22 (RELALERRKALSNSGK). Composition is skewed to polar residues over residues 17–36 (LSNSGKKSTTLNGSSPNRIR) and 69–82 (DTSFVASRESSGAS). One copy of the N-repeat 2 repeat lies at 94-109 (RELVLARRDELSRRGQ). 2 stretches are compositionally biased toward basic and acidic residues: residues 97 to 106 (VLARRDELSR) and 113 to 126 (KSKDRTRAEVEKIS). Polar residues predominate over residues 161 to 175 (DTVSRLSSRNSTSRP). 2 N-repeat repeats span residues 187-202 (RALVLARREAQSKHGK) and 225-240 (REISQRVRELRSKSGA). Positions 218–236 (GDPDLSSREISQRVRELRS) are enriched in basic and acidic residues. The middle region stretch occupies residues 240-615 (ATGKKRSGAC…VQACGSDAPA (376 aa)). M-repeat repeat units lie at residues 270-319 (KVGL…DTFC), 330-379 (KVAV…NQYC), 388-427 (KVGQSVTEDGRKVSGVMVGRSEKVTGDEAGSNRQLTGDQY), 441-490 (KVGS…NTFC), 500-549 (KVGL…SGWC), and 560-609 (RTPK…VQAC). 2 disordered regions span residues 608–662 (ACGS…GSQI) and 687–792 (HFKS…GARG). A C-terminal domain region spans residues 616–792 (GSNDHQGSSE…LITVSGGARG (177 aa)). Polar residues-rich tracts occupy residues 618-636 (NDHQGSSESSPWTHFSVQS) and 651-662 (VTGTSYEQGSQI). 2 C-repeat repeats span residues 633-678 (SVQS…GTEQ) and 703-738 (TRPESRVTGEGQSAGLNITGDDWDRSERVTGTEGAS). The segment at 763-792 (EVSQPMSRVTGSSGNTDQGSLITVSGGARG) is C-terminal peptide (CTP). The segment covering 764-785 (VSQPMSRVTGSSGNTDQGSLIT) has biased composition (polar residues).

It belongs to the CsoS2 family. In terms of assembly, probably interacts with the carboxysome major shell protein CsoS1 via the N-terminal domain; this complex probably also interacts with RuBisCO. Has been suggested to undergo ribosomal frameshifting, as does its ortholog in H.neapolitanus. The exact position of the putative frameshift is not given, but it would probably occur in the sixth M-repeat and remove the C-terminus.

The protein resides in the carboxysome. In terms of biological role, required for alpha-carboxysome (Cb) assembly, mediates interaction between RuBisCO and the Cb shell. The protein is probably intrinsically disordered. The C-terminal repeats act as the encapsulation signal to target proteins to the Cb; they are necessary and sufficient to target both CsoS2 and foreign proteins to the Cb. The N-terminal repeats of this protein bind simultaneously to both subunits of RuBisCO. Probably also interacts with the major shell proteins (CsoS1); that interaction would increase the local concentration of CsoS2 so that it can condense RuBisCO and full carboxysomes can be formed. The protein is Carboxysome assembly protein CsoS2 of Prochlorococcus marinus (strain MIT 9313).